We begin with the raw amino-acid sequence, 510 residues long: Probable serine/threonine-protein kinase 2 (510 aa).

The 254-residue stretch at 111-364 folds into the Protein kinase domain; the sequence is YVLNKKIGKG…ALQALGHQWF (254 aa). ATP is bound by residues 117 to 125 and Lys140; that span reads IGKGSFSTA. The active-site Proton acceptor is Asp230. The segment at 408 to 428 is disordered; sequence NDDIYNNNNNNNQLDPNKNHK.

It belongs to the protein kinase superfamily. Ser/Thr protein kinase family.

It localises to the membrane. It carries out the reaction L-seryl-[protein] + ATP = O-phospho-L-seryl-[protein] + ADP + H(+). The catalysed reaction is L-threonyl-[protein] + ATP = O-phospho-L-threonyl-[protein] + ADP + H(+). The polypeptide is Probable serine/threonine-protein kinase 2 (PK2) (Plasmodium falciparum (isolate K1 / Thailand)).